The primary structure comprises 232 residues: NAD(P)H-hydrate epimerase (232 aa).

One can recognise a YjeF N-terminal domain in the interval 9-219 (AISVDEELFN…KLQDKYAMEL (211 aa)). (6S)-NADPHX is bound at residue 62–66 (NNGGD). K(+) contacts are provided by Asn-63 and Asp-127. (6S)-NADPHX contacts are provided by residues 131 to 137 (GFSFKPP) and Asp-160. K(+) is bound at residue Ser-163.

Belongs to the NnrE/AIBP family. The cofactor is K(+).

It carries out the reaction (6R)-NADHX = (6S)-NADHX. It catalyses the reaction (6R)-NADPHX = (6S)-NADPHX. Catalyzes the epimerization of the S- and R-forms of NAD(P)HX, a damaged form of NAD(P)H that is a result of enzymatic or heat-dependent hydration. This is a prerequisite for the S-specific NAD(P)H-hydrate dehydratase to allow the repair of both epimers of NAD(P)HX. The protein is NAD(P)H-hydrate epimerase of Aedes aegypti (Yellowfever mosquito).